Reading from the N-terminus, the 285-residue chain is Phosphate import ATP-binding protein PstB (285 aa).

An ABC transporter domain is found at 39-280 (LEVSDLQLWY…PAKKQTEDYI (242 aa)). 71 to 78 (GPSGCGKS) provides a ligand contact to ATP.

It belongs to the ABC transporter superfamily. Phosphate importer (TC 3.A.1.7) family. In terms of assembly, the complex is composed of two ATP-binding proteins (PstB), two transmembrane proteins (PstC and PstA) and a solute-binding protein (PstS).

The protein resides in the cell inner membrane. It catalyses the reaction phosphate(out) + ATP + H2O = ADP + 2 phosphate(in) + H(+). Its function is as follows. Part of the ABC transporter complex PstSACB involved in phosphate import. Responsible for energy coupling to the transport system. The sequence is that of Phosphate import ATP-binding protein PstB from Alkalilimnicola ehrlichii (strain ATCC BAA-1101 / DSM 17681 / MLHE-1).